A 66-amino-acid polypeptide reads, in one-letter code: Large ribosomal subunit protein bL35 (66 aa).

Basic residues predominate over residues 1 to 24; it reads MPKQKTHRGAAKRFKKTGSGKLKR. A disordered region spans residues 1–26; sequence MPKQKTHRGAAKRFKKTGSGKLKRDH.

Belongs to the bacterial ribosomal protein bL35 family.

The sequence is that of Large ribosomal subunit protein bL35 from Bacillus cytotoxicus (strain DSM 22905 / CIP 110041 / 391-98 / NVH 391-98).